The primary structure comprises 231 residues: DNA mismatch repair protein MutH (231 aa).

This sequence belongs to the MutH family.

It is found in the cytoplasm. Sequence-specific endonuclease that cleaves unmethylated GATC sequences. It is involved in DNA mismatch repair. The protein is DNA mismatch repair protein MutH of Salmonella paratyphi A (strain ATCC 9150 / SARB42).